Consider the following 354-residue polypeptide: Probable DNA repair protein RAD51 homolog 4 (354 aa).

115–122 (GNTSCGKT) lines the ATP pocket.

Belongs to the RecA family. RAD51 subfamily.

It localises to the nucleus. Its function is as follows. Involved in the homologous recombination repair (HRR) pathway of double-stranded DNA breaks arising during DNA replication or induced by DNA-damaging agents. This is Probable DNA repair protein RAD51 homolog 4 (rad51d) from Dictyostelium discoideum (Social amoeba).